A 433-amino-acid polypeptide reads, in one-letter code: MESLNALLQGMGLMHLGAGQAIMLLVSLLLLWLAIAKKFEPLLLLPIGFGGLLSNIPEAGMALTALESLLAHHDAGQLAVIAAKLNCAPDVHAIKEALALALPSVQNQMENLAVDMGYTPGVLALFYKVAIGSGVAPLVIFMGVGAMTDFGPLLANPRTLLLGAAAQFGIFATVLGALTLNYFGLIAFTLPQAAAIGIIGGADGPTAIYLSGKLAPELLGAIAVAAYSYMALVPLIQPPIMRALTSEKERKIRMVQLRTVSKREKILFPVVLLLLVALLLPDAAPLLGMFCFGNLMRESGVVERLSDTVQNGLINIVTIFLGLSVGAKLVADKFLQPQTLGILLLGVIAFGIGTAAGVLMAKLLNLCSKNKINPLIGSAGVSAVPMAARVSNKVGLESNPQNFLLMHAMGPNVAGVIGSAIAAGVMLKYVLAM.

Helical transmembrane passes span 16 to 36 (LGAG…LAIA), 42 to 62 (LLLL…AGMA), 122 to 142 (VLAL…VIFM), 168 to 188 (FGIF…LIAF), 190 to 210 (LPQA…AIYL), 216 to 236 (PELL…VPLI), 266 to 286 (ILFP…AAPL), 311 to 331 (NGLI…KLVA), 340 to 360 (LGIL…GVLM), and 413 to 433 (VAGV…VLAM).

Belongs to the GcdB/MmdB/OadB family. In terms of assembly, heterotrimer of an alpha, a beta and a gamma subunit. Requires Na(+) as cofactor.

The protein localises to the cell membrane. It catalyses the reaction oxaloacetate + 2 Na(+)(in) + H(+) = pyruvate + 2 Na(+)(out) + CO2. Catalyzes the decarboxylation of oxaloacetate coupled to Na(+) translocation. The polypeptide is Oxaloacetate decarboxylase beta chain 2 (oadB2) (Salmonella typhi).